Reading from the N-terminus, the 918-residue chain is Translation initiation factor IF-2 (918 aa).

The interval 39–321 (DDASEKHLRN…KRDGRMKETT (283 aa)) is disordered. A compositionally biased stretch (low complexity) spans 95–146 (KSSNNESTTRNNNNNKNGNQNRNNTNGRPNNNQNRPNNNRNQNNNRNGNRPN). Positions 148–158 (PKRDEKQDRIR) are enriched in basic and acidic residues. Positions 159 to 174 (ASVAEAARMAAQANRE) are enriched in low complexity. Polar residues predominate over residues 180-190 (PQANRQRTNSA). 3 stretches are compositionally biased toward low complexity: residues 201 to 231 (NNQN…NNRN), 237 to 267 (SRPN…TANN), and 278 to 296 (GRNN…QNRP). The span at 302 to 313 (RKNKKRNRKAKR) shows a compositional bias: basic residues. Residues 419–588 (SRPPVVTIMG…LLQAEVLELK (170 aa)) form the tr-type G domain. A G1 region spans residues 428–435 (GHVDHGKT). 428–435 (GHVDHGKT) lines the GTP pocket. The tract at residues 453-457 (GITQG) is G2. A G3 region spans residues 474–477 (DTPG). GTP contacts are provided by residues 474 to 478 (DTPGH) and 528 to 531 (NKID). The segment at 528–531 (NKID) is G4. The G5 stretch occupies residues 564–566 (SAK).

The protein belongs to the TRAFAC class translation factor GTPase superfamily. Classic translation factor GTPase family. IF-2 subfamily.

It localises to the cytoplasm. In terms of biological role, one of the essential components for the initiation of protein synthesis. Protects formylmethionyl-tRNA from spontaneous hydrolysis and promotes its binding to the 30S ribosomal subunits. Also involved in the hydrolysis of GTP during the formation of the 70S ribosomal complex. The chain is Translation initiation factor IF-2 from Pediococcus pentosaceus (strain ATCC 25745 / CCUG 21536 / LMG 10740 / 183-1w).